The chain runs to 181 residues: Peptidyl-tRNA hydrolase (181 aa).

Y14 contributes to the tRNA binding site. The active-site Proton acceptor is H19. TRNA is bound by residues Y62, N64, and N108.

The protein belongs to the PTH family. Monomer.

It localises to the cytoplasm. The catalysed reaction is an N-acyl-L-alpha-aminoacyl-tRNA + H2O = an N-acyl-L-amino acid + a tRNA + H(+). Functionally, hydrolyzes ribosome-free peptidyl-tRNAs (with 1 or more amino acids incorporated), which drop off the ribosome during protein synthesis, or as a result of ribosome stalling. Its function is as follows. Catalyzes the release of premature peptidyl moieties from peptidyl-tRNA molecules trapped in stalled 50S ribosomal subunits, and thus maintains levels of free tRNAs and 50S ribosomes. The protein is Peptidyl-tRNA hydrolase of Campylobacter jejuni subsp. jejuni serotype O:23/36 (strain 81-176).